Here is a 259-residue protein sequence, read N- to C-terminus: Probable WRKY transcription factor 65 (259 aa).

The span at 1–17 (MKRGLDMARSYNDHESS) shows a compositional bias: basic and acidic residues. Disordered stretches follow at residues 1–101 (MKRG…RCSS) and 126–165 (TSEH…EEED). Residues 18-31 (QETGPESPNSSTFN) show a composition bias toward polar residues. Basic and acidic residues predominate over residues 47 to 69 (RSVEKRVVNVPMKEMEGSRHKGD). Positions 68–134 (GDTTPPSDSW…YTSEHNHPWP (67 aa)) form a DNA-binding region, WRKY. A compositionally biased stretch (acidic residues) spans 154-165 (EPEVEPEAEEED).

The protein resides in the nucleus. Functionally, transcription factor. Interacts specifically with the W box (5'-(T)TGAC[CT]-3'), a frequently occurring elicitor-responsive cis-acting element. In Arabidopsis thaliana (Mouse-ear cress), this protein is Probable WRKY transcription factor 65 (WRKY65).